The following is a 218-amino-acid chain: Probable transaldolase (218 aa).

Lysine 87 functions as the Schiff-base intermediate with substrate in the catalytic mechanism.

Belongs to the transaldolase family. Type 3B subfamily.

The protein resides in the cytoplasm. It catalyses the reaction D-sedoheptulose 7-phosphate + D-glyceraldehyde 3-phosphate = D-erythrose 4-phosphate + beta-D-fructose 6-phosphate. It functions in the pathway carbohydrate degradation; pentose phosphate pathway; D-glyceraldehyde 3-phosphate and beta-D-fructose 6-phosphate from D-ribose 5-phosphate and D-xylulose 5-phosphate (non-oxidative stage): step 2/3. In terms of biological role, transaldolase is important for the balance of metabolites in the pentose-phosphate pathway. This chain is Probable transaldolase, found in Bacteroides thetaiotaomicron (strain ATCC 29148 / DSM 2079 / JCM 5827 / CCUG 10774 / NCTC 10582 / VPI-5482 / E50).